Consider the following 181-residue polypeptide: Translation initiation factor IF-3 (181 aa).

The protein belongs to the IF-3 family. In terms of assembly, monomer.

The protein localises to the cytoplasm. Its function is as follows. IF-3 binds to the 30S ribosomal subunit and shifts the equilibrium between 70S ribosomes and their 50S and 30S subunits in favor of the free subunits, thus enhancing the availability of 30S subunits on which protein synthesis initiation begins. This chain is Translation initiation factor IF-3, found in Mycoplasma capricolum subsp. capricolum (strain California kid / ATCC 27343 / NCTC 10154).